The following is a 62-amino-acid chain: Calmodulin regulator protein PCP4 (62 aa).

The disordered stretch occupies residues 1 to 39; that stretch reads MSERQGAGATNGKDKTSGENDGQKKVQEEFDIDMDAPET. The span at 12–28 shows a compositional bias: basic and acidic residues; sequence GKDKTSGENDGQKKVQE. The interval 28 to 40 is acidic; binds calcium and is required for modulating the calcium-binding kinetics of calmodulin; the sequence is EEFDIDMDAPETE. The IQ domain maps to 39-62; the sequence is TERAAVAIQSQFRKFQKKKAGSQS.

This sequence belongs to the PCP4 family. As to quaternary structure, binds to both calcium-free and calcium-bound calmodulin. The affinity for the calcium-bound form is 50-fold greater.

Functionally, functions as a modulator of calcium-binding by calmodulin. Thereby, regulates calmodulin activity and the different processes it controls. For instance, may play a role in neuronal differentiation through activation of calmodulin-dependent kinase signaling pathways. The chain is Calmodulin regulator protein PCP4 from Homo sapiens (Human).